We begin with the raw amino-acid sequence, 205 residues long: Glycerol-3-phosphate acyltransferase (205 aa).

A run of 5 helical transmembrane segments spans residues 4–24 (IAPG…AILV), 80–100 (PFWL…PVFF), 107–127 (GVAT…GVMA), 130–150 (WLLT…SALI), and 155–175 (VWWF…LILL).

It belongs to the PlsY family. As to quaternary structure, probably interacts with PlsX.

The protein localises to the cell inner membrane. It catalyses the reaction an acyl phosphate + sn-glycerol 3-phosphate = a 1-acyl-sn-glycero-3-phosphate + phosphate. Its pathway is lipid metabolism; phospholipid metabolism. Functionally, catalyzes the transfer of an acyl group from acyl-phosphate (acyl-PO(4)) to glycerol-3-phosphate (G3P) to form lysophosphatidic acid (LPA). This enzyme utilizes acyl-phosphate as fatty acyl donor, but not acyl-CoA or acyl-ACP. The sequence is that of Glycerol-3-phosphate acyltransferase from Klebsiella pneumoniae (strain 342).